Reading from the N-terminus, the 350-residue chain is N-acetyl-gamma-glutamyl-phosphate reductase (350 aa).

Residue C154 is part of the active site.

It belongs to the NAGSA dehydrogenase family. Type 1 subfamily.

It is found in the cytoplasm. The enzyme catalyses N-acetyl-L-glutamate 5-semialdehyde + phosphate + NADP(+) = N-acetyl-L-glutamyl 5-phosphate + NADPH + H(+). It participates in amino-acid biosynthesis; L-arginine biosynthesis; N(2)-acetyl-L-ornithine from L-glutamate: step 3/4. In terms of biological role, catalyzes the NADPH-dependent reduction of N-acetyl-5-glutamyl phosphate to yield N-acetyl-L-glutamate 5-semialdehyde. In Corynebacterium efficiens (strain DSM 44549 / YS-314 / AJ 12310 / JCM 11189 / NBRC 100395), this protein is N-acetyl-gamma-glutamyl-phosphate reductase.